Reading from the N-terminus, the 237-residue chain is 3-oxoacyl-[acyl-carrier-protein] reductase (237 aa).

The residue at position 1 (Met1) is an N-acetylmethionine. NADP(+) is bound by residues 11 to 14 (SRGI), 34 to 35 (RN), Asp56, and 83 to 85 (AAG). A substrate-binding site is contributed by Ser135. Residues Tyr148, Lys152, and 181–183 (IHT) each bind NADP(+). The active-site Proton acceptor is the Tyr148. The residue at position 195 (Lys195) is an N6-acetyllysine.

The protein belongs to the short-chain dehydrogenases/reductases (SDR) family. In terms of assembly, homotetramer (in vitro). Heterotetramer with HSD17B8; contains two molecules each of HSD17B8 and CBR4. Does not form homotetramers when HSD17B8 is coexpressed, only heterotetramers (in vitro).

It is found in the mitochondrion matrix. The enzyme catalyses a (3R)-hydroxyacyl-[ACP] + NADP(+) = a 3-oxoacyl-[ACP] + NADPH + H(+). It carries out the reaction a quinone + NADPH + H(+) = a quinol + NADP(+). It functions in the pathway lipid metabolism; fatty acid biosynthesis. Functionally, component of the heterotetramer complex KAR (3-ketoacyl-[acyl carrier protein] reductase or 3-ketoacyl-[ACP] reductase) that forms part of the mitochondrial fatty acid synthase (mtFAS). Beta-subunit of the KAR heterotetramer complex, responsible for the 3-ketoacyl-ACP reductase activity of the mtFAS, reduces 3-oxoacyl-[ACP] to (3R)-hydroxyacyl-[ACP] in a NADPH-dependent manner with no chain length preference, thereby participating in mitochondrial fatty acid biosynthesis. The homotetramer has NADPH-dependent quinone reductase activity (in vitro), hence could play a role in protection against cytotoxicity of exogenous quinones. As a heterotetramer, it can also reduce 9,10-phenanthrenequinone, 1,4-benzoquinone and various other o-quinones and p-quinones (in vitro). This is 3-oxoacyl-[acyl-carrier-protein] reductase (CBR4) from Bos taurus (Bovine).